We begin with the raw amino-acid sequence, 562 residues long: Formate--tetrahydrofolate ligase (562 aa).

Residue 71–78 (TPAGEGKS) coordinates ATP.

It belongs to the formate--tetrahydrofolate ligase family.

It carries out the reaction (6S)-5,6,7,8-tetrahydrofolate + formate + ATP = (6R)-10-formyltetrahydrofolate + ADP + phosphate. Its pathway is one-carbon metabolism; tetrahydrofolate interconversion. The polypeptide is Formate--tetrahydrofolate ligase (Bacillus thuringiensis (strain Al Hakam)).